The following is a 293-amino-acid chain: Ethanolamine ammonia-lyase small subunit (293 aa).

Adenosylcob(III)alamin contacts are provided by valine 207 and glutamate 228.

The protein belongs to the EutC family. In terms of assembly, the basic unit is a heterodimer which dimerizes to form tetramers. The heterotetramers trimerize; 6 large subunits form a core ring with 6 small subunits projecting outwards. Adenosylcob(III)alamin serves as cofactor.

It localises to the bacterial microcompartment. The catalysed reaction is ethanolamine = acetaldehyde + NH4(+). The protein operates within amine and polyamine degradation; ethanolamine degradation. In terms of biological role, catalyzes the deamination of various vicinal amino-alcohols to oxo compounds. Allows this organism to utilize ethanolamine as the sole source of nitrogen and carbon in the presence of external vitamin B12. In Listeria monocytogenes serovar 1/2a (strain ATCC BAA-679 / EGD-e), this protein is Ethanolamine ammonia-lyase small subunit.